The primary structure comprises 148 residues: Transcription antitermination protein NusB (148 aa).

This sequence belongs to the NusB family.

Functionally, involved in transcription antitermination. Required for transcription of ribosomal RNA (rRNA) genes. Binds specifically to the boxA antiterminator sequence of the ribosomal RNA (rrn) operons. This Desulfitobacterium hafniense (strain DSM 10664 / DCB-2) protein is Transcription antitermination protein NusB.